A 263-amino-acid chain; its full sequence is Glutamate 5-kinase (263 aa).

An ATP-binding site is contributed by Lys14. Positions 52, 137, and 149 each coordinate substrate. Residues 169 to 170 (SD) and 211 to 217 (TGGIVTK) contribute to the ATP site.

It belongs to the glutamate 5-kinase family. In terms of assembly, homotetramer; oligomerization is not affected by L-proline feedback inhibition. Mg(2+) is required as a cofactor.

The catalysed reaction is L-glutamate + ATP = L-glutamyl 5-phosphate + ADP. The protein operates within amino-acid biosynthesis; L-proline biosynthesis; L-glutamate 5-semialdehyde from L-glutamate: step 1/2. Its activity is regulated as follows. Inhibited by L-proline as part of a negative feedback loop. Also inhibited by L-proline analogs 3,4-dehydro-L-proline, L-azetidine-2-carboxylic acid and L-4-thiazolidine carboxylic acid. Catalyzes the transfer of a phosphate group to glutamate to form L-glutamate 5-phosphate. May be important for growth and survival. This chain is Glutamate 5-kinase, found in Leishmania donovani.